We begin with the raw amino-acid sequence, 337 residues long: Protein FAM76B (337 aa).

A disordered region spans residues E143 to T241. Low complexity predominate over residues S147–S159. Basic residues predominate over residues H166 to I187. The span at T213–F222 shows a compositional bias: basic and acidic residues. The segment covering N226 to T241 has biased composition (polar residues). Residues K301–K326 are a coiled coil.

The protein belongs to the FAM76 family.

In terms of biological role, plays a role in hematopoiesis and immune system development, and participates in the inflammatory response. This Xenopus laevis (African clawed frog) protein is Protein FAM76B (fam76b).